We begin with the raw amino-acid sequence, 271 residues long: Zinc finger CCHC domain-containing protein 9 (271 aa).

Residues 1–40 are disordered; that stretch reads MTRWARVSTTYNKRPLPATSWEDMKKGSFEGTSQNLPKRK. At serine 48 the chain carries Phosphoserine. CCHC-type zinc fingers lie at residues 128–145, 155–172, 184–201, and 211–228; these read MVCF…DCPA, GICY…KCKA, AKCF…SCPD, and GGCK…DCPE.

It localises to the nucleus. Its subcellular location is the nucleolus. In terms of biological role, may down-regulate transcription mediated by NF-kappa-B and the serum response element. This Homo sapiens (Human) protein is Zinc finger CCHC domain-containing protein 9 (ZCCHC9).